Here is a 111-residue protein sequence, read N- to C-terminus: Large ribosomal subunit protein uL22 (111 aa).

Belongs to the universal ribosomal protein uL22 family. In terms of assembly, part of the 50S ribosomal subunit.

This protein binds specifically to 23S rRNA; its binding is stimulated by other ribosomal proteins, e.g. L4, L17, and L20. It is important during the early stages of 50S assembly. It makes multiple contacts with different domains of the 23S rRNA in the assembled 50S subunit and ribosome. Functionally, the globular domain of the protein is located near the polypeptide exit tunnel on the outside of the subunit, while an extended beta-hairpin is found that lines the wall of the exit tunnel in the center of the 70S ribosome. The protein is Large ribosomal subunit protein uL22 of Acidithiobacillus ferrooxidans (strain ATCC 23270 / DSM 14882 / CIP 104768 / NCIMB 8455) (Ferrobacillus ferrooxidans (strain ATCC 23270)).